Consider the following 123-residue polypeptide: MAQWKTLTKRSQGANFEQKAREFLERNGLKFIAANQQFKCGELDLIMRQGDTFVFVEVRQRKSNRFGSAVESIDYRKQQKWLDAANMWLFTRHKQSLDTANCRFDVVAFEGNDPPLWIPNFLG.

Belongs to the UPF0102 family.

The sequence is that of UPF0102 protein APJL_1381 from Actinobacillus pleuropneumoniae serotype 3 (strain JL03).